The following is a 355-amino-acid chain: Ataxin-3 (355 aa).

Residue Met-1 forms a Peptide (Met-Gly) (interchain with G-Cter in ubiquitin) linkage. Residues 1-180 (MESIFHEKQE…DCEADQLLQM (180 aa)) enclose the Josephin domain. The active-site Nucleophile is the Cys-14. The active-site Proton acceptor is His-119. The active site involves Asn-134. Residue Lys-200 forms a Glycyl lysine isopeptide (Lys-Gly) (interchain with G-Cter in ubiquitin) linkage. UIM domains are found at residues 224-243 (DDED…IDME) and 244-263 (DEEA…SSRG). The segment at 257–333 (MQGSSRGMCE…AGNAMSEEDV (77 aa)) is disordered. A phosphoserine mark is found at Ser-268, Ser-272, and Ser-273. Residues 279–301 (EELRKRREAYFEKQQHQQQEADR) show a composition bias toward basic and acidic residues. Residues 312-326 (PTTSSGGLRSNQAGN) are compositionally biased toward polar residues. The residue at position 321 (Ser-321) is a Phosphoserine. Positions 329–348 (SEEDVLRATVTVSLETAKDS) constitute a UIM 3 domain.

Interacts with STUB1/CHIP (when monoubiquitinated). Interacts with DNA repair proteins RAD23A and RAD23B. Interacts with BECN1 (via its poly-Gln domain). Interacts with PRKN, UBR2, VCP and tubulin. Post-translationally, monoubiquitinated by UBE2W, possibly leading to activate the deubiquitinating enzyme activity. Ubiquitously expressed.

The protein localises to the nucleus matrix. It localises to the nucleus. Its subcellular location is the lysosome membrane. It carries out the reaction Thiol-dependent hydrolysis of ester, thioester, amide, peptide and isopeptide bonds formed by the C-terminal Gly of ubiquitin (a 76-residue protein attached to proteins as an intracellular targeting signal).. In terms of biological role, deubiquitinating enzyme involved in protein homeostasis maintenance, transcription, cytoskeleton regulation, myogenesis and degradation of misfolded chaperone substrates. Binds long polyubiquitin chains and trims them, while it has weak or no activity against chains of 4 or less ubiquitins. Involved in degradation of misfolded chaperone substrates via its interaction with STUB1/CHIP: recruited to monoubiquitinated STUB1/CHIP, and restricts the length of ubiquitin chain attached to STUB1/CHIP substrates and preventing further chain extension. Interacts with key regulators of transcription and represses transcription: acts as a histone-binding protein that regulates transcription. Acts as a negative regulator of mTORC1 signaling in response to amino acid deprivation by mediating deubiquitination of RHEB, thereby promoting RHEB inactivation by the TSC-TBC complex. Regulates autophagy via the deubiquitination of 'Lys-402' of BECN1 leading to the stabilization of BECN1. The sequence is that of Ataxin-3 (Atxn3) from Rattus norvegicus (Rat).